Here is a 511-residue protein sequence, read N- to C-terminus: Inositol-3-phosphate synthase isozyme 1 (511 aa).

24 residues coordinate NAD(+): G71, G72, N73, N74, D144, I181, Q191, R194, T231, A232, N233, T234, G282, S283, D307, S310, N341, N342, D343, K356, A394, D395, D423, and S424.

Belongs to the myo-inositol 1-phosphate synthase family. As to quaternary structure, homotrimer or homotetramer. Interacts with ATXR5 and ATXR6. Requires NAD(+) as cofactor. As to expression, expressed in siliques, leaves, roots, seed endosperm, but not in embryos. Highest expression in leaves, but restricted to vascular tissue in older leaves.

The protein resides in the cytoplasm. It is found in the cytosol. It localises to the nucleus. The catalysed reaction is D-glucose 6-phosphate = 1D-myo-inositol 3-phosphate. It participates in polyol metabolism; myo-inositol biosynthesis; myo-inositol from D-glucose 6-phosphate: step 1/2. Functionally, key enzyme in myo-inositol biosynthesis pathway that catalyzes the conversion of glucose 6-phosphate to 1-myo-inositol 1-phosphate in a NAD-dependent manner. Catalyzes the majority of myo-inositol synthesis required for plant growth and development. Acts as a repressor of programmed cell death and protects plant cells against cell death under high light intensity or long days. Controls its own transcription by inhibiting ATXR6 activity. Reduces the deposition of inhibitory histone marks on its own promoter. The chain is Inositol-3-phosphate synthase isozyme 1 (IPS1) from Arabidopsis thaliana (Mouse-ear cress).